Consider the following 115-residue polypeptide: T cell receptor beta variable 7-4 (115 aa).

A signal peptide spans 1 to 21; that stretch reads MGTRLLCWVVLGFLGTDHTGA. Positions 22–115 constitute an Ig-like domain; the sequence is GVSQSPRYKV…SAVYLCASSL (94 aa). The cysteines at positions 42 and 111 are disulfide-linked. The interval 67–97 is disordered; that stretch reads YSQSDAQRDKSGRPSGRFSAERPERSVSTLK.

In terms of assembly, alpha-beta TR is a heterodimer composed of an alpha and beta chain; disulfide-linked. The alpha-beta TR is associated with the transmembrane signaling CD3 coreceptor proteins to form the TR-CD3 (TcR or TCR). The assembly of alpha-beta TR heterodimers with CD3 occurs in the endoplasmic reticulum where a single alpha-beta TR heterodimer associates with one CD3D-CD3E heterodimer, one CD3G-CD3E heterodimer and one CD247 homodimer forming a stable octameric structure. CD3D-CD3E and CD3G-CD3E heterodimers preferentially associate with TR alpha and TR beta chains, respectively. The association of the CD247 homodimer is the last step of TcR assembly in the endoplasmic reticulum and is required for transport to the cell surface.

It localises to the cell membrane. In terms of biological role, v region of the variable domain of T cell receptor (TR) beta chain that participates in the antigen recognition. Alpha-beta T cell receptors are antigen specific receptors which are essential to the immune response and are present on the cell surface of T lymphocytes. Recognize peptide-major histocompatibility (MH) (pMH) complexes that are displayed by antigen presenting cells (APC), a prerequisite for efficient T cell adaptive immunity against pathogens. Binding of alpha-beta TR to pMH complex initiates TR-CD3 clustering on the cell surface and intracellular activation of LCK that phosphorylates the ITAM motifs of CD3G, CD3D, CD3E and CD247 enabling the recruitment of ZAP70. In turn ZAP70 phosphorylates LAT, which recruits numerous signaling molecules to form the LAT signalosome. The LAT signalosome propagates signal branching to three major signaling pathways, the calcium, the mitogen-activated protein kinase (MAPK) kinase and the nuclear factor NF-kappa-B (NF-kB) pathways, leading to the mobilization of transcription factors that are critical for gene expression and essential for T cell growth and differentiation. The T cell repertoire is generated in the thymus, by V-(D)-J rearrangement. This repertoire is then shaped by intrathymic selection events to generate a peripheral T cell pool of self-MH restricted, non-autoaggressive T cells. Post-thymic interaction of alpha-beta TR with the pMH complexes shapes TR structural and functional avidity. The chain is T cell receptor beta variable 7-4 from Homo sapiens (Human).